We begin with the raw amino-acid sequence, 245 residues long: Complement C1q subcomponent subunit C (245 aa).

A signal peptide spans 1–28; it reads MDVGPSSLPHLGLKLLLLLLLLPLRGQA. The region spanning 31 to 112 is the Collagen-like domain; sequence GCYGIPGMPG…GIPGEPGEEG (82 aa). Pro-36, Pro-39, Pro-42, Pro-45, Pro-54, and Pro-63 each carry 4-hydroxyproline. The segment at 45–113 is disordered; the sequence is PGKDGYDGLP…IPGEPGEEGR (69 aa). Over residues 54 to 71 the composition is skewed to low complexity; sequence PGPKGEPGIPAIPGIRGP. 5-hydroxylysine is present on Lys-75. An O-linked (Gal...) hydroxylysine glycan is attached at Lys-75. 5 positions are modified to 4-hydroxyproline: Pro-81, Pro-93, Pro-96, Pro-99, and Pro-105. Over residues 90 to 99 the composition is skewed to pro residues; that stretch reads MGPPGMPGVP. The region spanning 115-245 is the C1q domain; the sequence is KQKFQSVFTV…VFSGFLLFPD (131 aa). The cysteines at positions 179 and 193 are disulfide-linked.

As to quaternary structure, core component of the complement C1 complex, a calcium-dependent complex composed of 1 molecule of the C1Q subcomplex, 2 molecules of C1R and 2 molecules of C1S. The C1Q subcomplex is composed 18 subunits: 3 chains of C1QA, C1QB, and C1QC trimerize to form 6 collagen-like triple helices connected to six globular ligand-recognition modules (C1q domain). O-linked glycans consist of Glc-Gal disaccharides bound to the oxygen atom of post-translationally added hydroxyl groups.

The protein resides in the secreted. Its subcellular location is the cell surface. Its activity is regulated as follows. The C1Q subcomplex is inhibited by sulfated molecules, such as triterpenoid sulfates, heparan sulfate, or chondroitin sulfates. In terms of biological role, core component of the complement C1 complex, a multiprotein complex that initiates the classical pathway of the complement system, a cascade of proteins that leads to phagocytosis and breakdown of pathogens and signaling that strengthens the adaptive immune system. The classical complement pathway is initiated by the C1Q subcomplex of the C1 complex, which specifically binds IgG or IgM immunoglobulins complexed with antigens, forming antigen-antibody complexes on the surface of pathogens: C1QA, together with C1QB and C1QC, specifically recognizes and binds the Fc regions of IgG or IgM via its C1q domain. Immunoglobulin-binding activates the proenzyme C1R, which cleaves C1S, initiating the proteolytic cascade of the complement system. The C1Q subcomplex is activated by a hexamer of IgG complexed with antigens, while it is activated by a pentameric IgM. The C1Q subcomplex also recognizes and binds phosphatidylserine exposed on the surface of cells undergoing programmed cell death, possibly promoting activation of the complement system. This chain is Complement C1q subcomponent subunit C, found in Homo sapiens (Human).